A 93-amino-acid polypeptide reads, in one-letter code: HIG1 domain family member 1A, mitochondrial (93 aa).

Residues 1–93 (MSTDTGVSLP…YREFWAKPKP (93 aa)) form the HIG1 domain. S2 carries the N-acetylserine modification. S8 bears the Phosphoserine mark. 2 helical membrane passes run 26-46 (EAPF…YGLY) and 60-80 (LIHM…VGMG).

In terms of assembly, associates with cytochrome c oxidase (COX, complex IV); proposed complex component. Also associates with respiratory chain supercomplexes.

It is found in the mitochondrion membrane. Its subcellular location is the mitochondrion inner membrane. Its function is as follows. Proposed subunit of cytochrome c oxidase (COX, complex IV), which is the terminal component of the mitochondrial respiratory chain that catalyzes the reduction of oxygen to water. May play a role in the assembly of respiratory supercomplexes. The protein is HIG1 domain family member 1A, mitochondrial (HIGD1A) of Homo sapiens (Human).